Reading from the N-terminus, the 428-residue chain is Adenylosuccinate synthetase (428 aa).

Residues 12–18 (GDEGKGK) and 40–42 (GHT) each bind GTP. The active-site Proton acceptor is Asp-13. Residues Asp-13 and Gly-40 each coordinate Mg(2+). IMP contacts are provided by residues 13 to 16 (DEGK), 38 to 41 (NAGH), Thr-128, Arg-142, Gln-223, Thr-238, and Arg-302. His-41 acts as the Proton donor in catalysis. 298-304 (TTTGRPR) lines the substrate pocket. Residues Arg-304, 330–332 (SID), and 412–414 (SVG) contribute to the GTP site.

The protein belongs to the adenylosuccinate synthetase family. Homodimer. It depends on Mg(2+) as a cofactor.

The protein localises to the cytoplasm. The catalysed reaction is IMP + L-aspartate + GTP = N(6)-(1,2-dicarboxyethyl)-AMP + GDP + phosphate + 2 H(+). Its pathway is purine metabolism; AMP biosynthesis via de novo pathway; AMP from IMP: step 1/2. Plays an important role in the de novo pathway of purine nucleotide biosynthesis. Catalyzes the first committed step in the biosynthesis of AMP from IMP. The polypeptide is Adenylosuccinate synthetase (Streptococcus pneumoniae serotype 2 (strain D39 / NCTC 7466)).